Here is a 172-residue protein sequence, read N- to C-terminus: Regulator of hemoglobinization and erythroid cell expansion protein (172 aa).

The chain crosses the membrane as a helical span at residues 9–29 (WHGLVIAVVSLFLQACFLTAI). The interval 52 to 106 (VPRPSPGHHHPPAVKEMKETQTERDIPMSDSLYRHDSDTPSDSLDSSCSSPPACQ) is disordered. Residues 64 to 89 (AVKEMKETQTERDIPMSDSLYRHDSD) are compositionally biased toward basic and acidic residues. Residues 91-103 (PSDSLDSSCSSPP) show a composition bias toward low complexity. 2 positions are modified to phosphotyrosine: Tyr132 and Tyr141.

In terms of assembly, interacts with EPOR; this interaction occurs in a erythropoietin (EPO)-dependent manner. Interacts with JAK2; this interaction occurs in a erythropoietin (EPO)-dependent manner. Interacts (via tyrosine-phosphorylated form) with GRB2. Phosphorylated. Phosphorylation on Tyr-132 and Tyr-141 occurs in a erythropoietin (EPO)-dependent manner. In terms of tissue distribution, expressed in the proerythroblasts (at protein level). Expressed strongly in the kidney. Expressed weakly in the pancreas, liver and lung. Expressed strongly in erythroid progenitor cells (EPCs). Expressed weakly in T-cells and neutrophils.

Its subcellular location is the cell membrane. Functionally, acts as a signaling transduction factor of the EPO-EPOR signaling pathway promoting erythroid cell differentiation. This is Regulator of hemoglobinization and erythroid cell expansion protein from Homo sapiens (Human).